The following is a 332-amino-acid chain: Holliday junction branch migration complex subunit RuvB (332 aa).

Residues 1–181 are large ATPase domain (RuvB-L); it reads MSRILDNEIM…FGITGHMEYY (181 aa). Residues Leu-20, Arg-21, Gly-62, Lys-65, Thr-66, Thr-67, 128-130, Arg-171, Tyr-181, and Arg-218 each bind ATP; that span reads EDF. Thr-66 provides a ligand contact to Mg(2+). Residues 182–252 are small ATPAse domain (RuvB-S); that stretch reads AHADLTEIVE…ITDKALTMLD (71 aa). The tract at residues 255–332 is head domain (RuvB-H); the sequence is HEGLDYVDQK…EHLGYEYNEK (78 aa). Residues Arg-291, Arg-310, Arg-312, and Arg-315 each contribute to the DNA site.

This sequence belongs to the RuvB family. As to quaternary structure, homohexamer. Forms an RuvA(8)-RuvB(12)-Holliday junction (HJ) complex. HJ DNA is sandwiched between 2 RuvA tetramers; dsDNA enters through RuvA and exits via RuvB. An RuvB hexamer assembles on each DNA strand where it exits the tetramer. Each RuvB hexamer is contacted by two RuvA subunits (via domain III) on 2 adjacent RuvB subunits; this complex drives branch migration. In the full resolvosome a probable DNA-RuvA(4)-RuvB(12)-RuvC(2) complex forms which resolves the HJ.

Its subcellular location is the cytoplasm. It catalyses the reaction ATP + H2O = ADP + phosphate + H(+). Its function is as follows. The RuvA-RuvB-RuvC complex processes Holliday junction (HJ) DNA during genetic recombination and DNA repair, while the RuvA-RuvB complex plays an important role in the rescue of blocked DNA replication forks via replication fork reversal (RFR). RuvA specifically binds to HJ cruciform DNA, conferring on it an open structure. The RuvB hexamer acts as an ATP-dependent pump, pulling dsDNA into and through the RuvAB complex. RuvB forms 2 homohexamers on either side of HJ DNA bound by 1 or 2 RuvA tetramers; 4 subunits per hexamer contact DNA at a time. Coordinated motions by a converter formed by DNA-disengaged RuvB subunits stimulates ATP hydrolysis and nucleotide exchange. Immobilization of the converter enables RuvB to convert the ATP-contained energy into a lever motion, pulling 2 nucleotides of DNA out of the RuvA tetramer per ATP hydrolyzed, thus driving DNA branch migration. The RuvB motors rotate together with the DNA substrate, which together with the progressing nucleotide cycle form the mechanistic basis for DNA recombination by continuous HJ branch migration. Branch migration allows RuvC to scan DNA until it finds its consensus sequence, where it cleaves and resolves cruciform DNA. The polypeptide is Holliday junction branch migration complex subunit RuvB (Streptococcus pneumoniae (strain CGSP14)).